We begin with the raw amino-acid sequence, 138 residues long: ATP synthase epsilon chain (138 aa).

It belongs to the ATPase epsilon chain family. In terms of assembly, F-type ATPases have 2 components, CF(1) - the catalytic core - and CF(0) - the membrane proton channel. CF(1) has five subunits: alpha(3), beta(3), gamma(1), delta(1), epsilon(1). CF(0) has three main subunits: a, b and c.

The protein resides in the cell inner membrane. In terms of biological role, produces ATP from ADP in the presence of a proton gradient across the membrane. This chain is ATP synthase epsilon chain, found in Bartonella henselae (strain ATCC 49882 / DSM 28221 / CCUG 30454 / Houston 1) (Rochalimaea henselae).